A 78-amino-acid polypeptide reads, in one-letter code: MSTIEERVKKIVAEQLGVKEEEVTNSASFVEDLGADSLDTVELVMALEEEFETEIPDEQAEKITTVQEAIDYVTAHAQ.

A Carrier domain is found at Ser2–Ala77. At Ser37 the chain carries O-(pantetheine 4'-phosphoryl)serine.

Belongs to the acyl carrier protein (ACP) family. In terms of processing, 4'-phosphopantetheine is transferred from CoA to a specific serine of apo-ACP by AcpS. This modification is essential for activity because fatty acids are bound in thioester linkage to the sulfhydryl of the prosthetic group.

It is found in the cytoplasm. It functions in the pathway lipid metabolism; fatty acid biosynthesis. Functionally, carrier of the growing fatty acid chain in fatty acid biosynthesis. The polypeptide is Acyl carrier protein (Ectopseudomonas mendocina (strain ymp) (Pseudomonas mendocina)).